Here is a 429-residue protein sequence, read N- to C-terminus: ATP-dependent RNA helicase RhlB (429 aa).

A Q motif motif is present at residues 9–37 (EKFAQMGLEPEVLAGLESKGFHYCTPIQA). Residues 40 to 219 (LPLLVEGHDL…YEHMNHPEHV (180 aa)) form the Helicase ATP-binding domain. An ATP-binding site is contributed by 53–60 (AQTGTGKT). The DEAD box signature appears at 165-168 (DEAD). One can recognise a Helicase C-terminal domain in the interval 243-390 (KMLLLLSLME…VSKYDREALL (148 aa)). Positions 395–429 (APKRVVRNRQPVNRNMRDRQGGGNSNNRRRPPRKS) are disordered.

It belongs to the DEAD box helicase family. RhlB subfamily. Component of the RNA degradosome, which is a multiprotein complex involved in RNA processing and mRNA degradation.

It is found in the cytoplasm. It carries out the reaction ATP + H2O = ADP + phosphate + H(+). Its function is as follows. DEAD-box RNA helicase involved in RNA degradation. Has RNA-dependent ATPase activity and unwinds double-stranded RNA. The protein is ATP-dependent RNA helicase RhlB of Aeromonas salmonicida (strain A449).